Consider the following 357-residue polypeptide: Peptide chain release factor 1 (357 aa).

Glutamine 234 is subject to N5-methylglutamine.

It belongs to the prokaryotic/mitochondrial release factor family. In terms of processing, methylated by PrmC. Methylation increases the termination efficiency of RF1.

Its subcellular location is the cytoplasm. Its function is as follows. Peptide chain release factor 1 directs the termination of translation in response to the peptide chain termination codons UAG and UAA. The polypeptide is Peptide chain release factor 1 (Lactococcus lactis subsp. cremoris (strain MG1363)).